The chain runs to 549 residues: Glucose-6-phosphate isomerase (549 aa).

An N6-acetyllysine mark is found at lysine 80, lysine 228, and lysine 234. Glutamate 355 serves as the catalytic Proton donor. Residues histidine 386 and lysine 514 contribute to the active site.

The protein belongs to the GPI family.

Its subcellular location is the cytoplasm. It catalyses the reaction alpha-D-glucose 6-phosphate = beta-D-fructose 6-phosphate. Its pathway is carbohydrate biosynthesis; gluconeogenesis. The protein operates within carbohydrate degradation; glycolysis; D-glyceraldehyde 3-phosphate and glycerone phosphate from D-glucose: step 2/4. Its function is as follows. Catalyzes the reversible isomerization of glucose-6-phosphate to fructose-6-phosphate. This Escherichia coli (strain SMS-3-5 / SECEC) protein is Glucose-6-phosphate isomerase.